Here is a 294-residue protein sequence, read N- to C-terminus: Pyridoxal 5'-phosphate synthase subunit PdxS (294 aa).

Residue Asp-24 coordinates D-ribose 5-phosphate. Catalysis depends on Lys-81, which acts as the Schiff-base intermediate with D-ribose 5-phosphate. Residue Gly-153 participates in D-ribose 5-phosphate binding. Arg-165 is a D-glyceraldehyde 3-phosphate binding site. Residues Gly-214 and 235 to 236 (GS) each bind D-ribose 5-phosphate.

It belongs to the PdxS/SNZ family. In the presence of PdxT, forms a dodecamer of heterodimers.

The catalysed reaction is aldehydo-D-ribose 5-phosphate + D-glyceraldehyde 3-phosphate + L-glutamine = pyridoxal 5'-phosphate + L-glutamate + phosphate + 3 H2O + H(+). The protein operates within cofactor biosynthesis; pyridoxal 5'-phosphate biosynthesis. In terms of biological role, catalyzes the formation of pyridoxal 5'-phosphate from ribose 5-phosphate (RBP), glyceraldehyde 3-phosphate (G3P) and ammonia. The ammonia is provided by the PdxT subunit. Can also use ribulose 5-phosphate and dihydroxyacetone phosphate as substrates, resulting from enzyme-catalyzed isomerization of RBP and G3P, respectively. The polypeptide is Pyridoxal 5'-phosphate synthase subunit PdxS (Bacillus licheniformis (strain ATCC 14580 / DSM 13 / JCM 2505 / CCUG 7422 / NBRC 12200 / NCIMB 9375 / NCTC 10341 / NRRL NRS-1264 / Gibson 46)).